A 461-amino-acid chain; its full sequence is Probable tubulin polyglutamylase TTLL9 (461 aa).

The interval 1–21 (MSRPKNQNYKGHGLQKGKERE) is disordered. The 381-residue stretch at 22 to 402 (QRASIRFKTT…EARLTGREKR (381 aa)) folds into the TTL domain. ATP contacts are provided by residues lysine 149 and 155 to 156 (QG). Glutamine 155 is an a protein binding site. The tract at residues 182–208 (SLEAQPARNTVNPSGSHDTRSSDDQKD) is disordered. Residues 188–197 (ARNTVNPSGS) are compositionally biased toward polar residues. Residues 198–208 (HDTRSSDDQKD) are compositionally biased toward basic and acidic residues. ATP is bound by residues 218–221 (QRYI) and 231–233 (KFD). An L-glutamate-binding site is contributed by arginine 257. ATP is bound at residue 276–277 (TN). Position 294 (lysine 294) interacts with L-glutamate. The Mg(2+) site is built by aspartate 348, glutamate 361, and asparagine 363. Lysine 379 provides a ligand contact to L-glutamate.

It belongs to the tubulin--tyrosine ligase family. Mg(2+) serves as cofactor.

It localises to the cytoplasm. It is found in the cytoskeleton. The protein localises to the cilium basal body. Its subcellular location is the flagellum axoneme. The enzyme catalyses (L-glutamyl)(n)-gamma-L-glutamyl-L-glutamyl-[protein] + L-glutamate + ATP = (L-glutamyl)(n+1)-gamma-L-glutamyl-L-glutamyl-[protein] + ADP + phosphate + H(+). Probable tubulin polyglutamylase that generates side chains of glutamate on the gamma-carboxyl group of specific glutamate residues within the C-terminal tail of target proteins. Similar to TTLL1, may acquire enzymatic activity only in complex with other proteins as it is most likely lacking domains important for autonomous activity. Mediates tubulin polyglutamylation which induces establishment of microtubule heterogeneity in sperm flagella, thereby playing a role in normal motile flagella axoneme structure and sperm flagella beating pattern. The chain is Probable tubulin polyglutamylase TTLL9 (TTLL9) from Bos taurus (Bovine).